The following is a 91-amino-acid chain: Small ribosomal subunit protein bS18 (91 aa).

The protein belongs to the bacterial ribosomal protein bS18 family. As to quaternary structure, part of the 30S ribosomal subunit. Forms a tight heterodimer with protein bS6.

Functionally, binds as a heterodimer with protein bS6 to the central domain of the 16S rRNA, where it helps stabilize the platform of the 30S subunit. This is Small ribosomal subunit protein bS18 from Burkholderia vietnamiensis (strain G4 / LMG 22486) (Burkholderia cepacia (strain R1808)).